A 575-amino-acid polypeptide reads, in one-letter code: Protein NRT1/ PTR FAMILY 5.6 (575 aa).

Transmembrane regions (helical) follow at residues 44 to 64 (AALFIIAIEFSERLSYFGLAT) and 88 to 108 (WSGVTTLMPLLGGFIADAYLG). Thr112 bears the Phosphothreonine mark. The next 10 membrane-spanning stretches (helical) occupy residues 113–133 (VLVATTIYLMGLVLLTMSWFI), 153–173 (VAFFIAIYLISIGTGGHKPSL), 195–215 (FFNWWNVSLCAGILTAVTAVA), 223–243 (WGVAGIILTVVMAISLIIFFI), 339–359 (LIINVIPIWFSTLAFGICATQ), 375–395 (IGGFTVPPASMFTLTALTLII), 420–440 (ILQRIGTGMIFSLITMIIAAL), 457–477 (VIWLAPQFMVIGFADAFTLVG), 493–513 (LGIAFYLSVIGAASFLNNLLI), and 541–561 (FYWFLAGVIAANICVFVIVAK).

Belongs to the major facilitator superfamily. Proton-dependent oligopeptide transporter (POT/PTR) (TC 2.A.17) family. As to expression, expressed in stems, shoots, leaves, flowers and siliques.

Its subcellular location is the membrane. The polypeptide is Protein NRT1/ PTR FAMILY 5.6 (NPF5.6) (Arabidopsis thaliana (Mouse-ear cress)).